We begin with the raw amino-acid sequence, 736 residues long: Phosphoribosylformylglycinamidine synthase subunit PurL (736 aa).

H49 is a catalytic residue. ATP is bound by residues Y52 and K91. Residue E93 coordinates Mg(2+). Residues 94–97 (SHNH) and R116 contribute to the substrate site. H95 serves as the catalytic Proton acceptor. Mg(2+) is bound at residue D117. Q240 provides a ligand contact to substrate. A Mg(2+)-binding site is contributed by D268. A substrate-binding site is contributed by 312-314 (ESQ). ATP is bound by residues D493 and G530. N531 provides a ligand contact to Mg(2+). S533 provides a ligand contact to substrate.

Belongs to the FGAMS family. Monomer. Part of the FGAM synthase complex composed of 1 PurL, 1 PurQ and 2 PurS subunits.

The protein resides in the cytoplasm. The catalysed reaction is N(2)-formyl-N(1)-(5-phospho-beta-D-ribosyl)glycinamide + L-glutamine + ATP + H2O = 2-formamido-N(1)-(5-O-phospho-beta-D-ribosyl)acetamidine + L-glutamate + ADP + phosphate + H(+). It participates in purine metabolism; IMP biosynthesis via de novo pathway; 5-amino-1-(5-phospho-D-ribosyl)imidazole from N(2)-formyl-N(1)-(5-phospho-D-ribosyl)glycinamide: step 1/2. In terms of biological role, part of the phosphoribosylformylglycinamidine synthase complex involved in the purines biosynthetic pathway. Catalyzes the ATP-dependent conversion of formylglycinamide ribonucleotide (FGAR) and glutamine to yield formylglycinamidine ribonucleotide (FGAM) and glutamate. The FGAM synthase complex is composed of three subunits. PurQ produces an ammonia molecule by converting glutamine to glutamate. PurL transfers the ammonia molecule to FGAR to form FGAM in an ATP-dependent manner. PurS interacts with PurQ and PurL and is thought to assist in the transfer of the ammonia molecule from PurQ to PurL. This Rhodopseudomonas palustris (strain BisB5) protein is Phosphoribosylformylglycinamidine synthase subunit PurL.